Here is a 108-residue protein sequence, read N- to C-terminus: Small ribosomal subunit protein uS17 (108 aa).

The protein belongs to the universal ribosomal protein uS17 family. As to quaternary structure, part of the 30S ribosomal subunit.

Its function is as follows. One of the primary rRNA binding proteins, it binds specifically to the 5'-end of 16S ribosomal RNA. In Methanoculleus marisnigri (strain ATCC 35101 / DSM 1498 / JR1), this protein is Small ribosomal subunit protein uS17.